We begin with the raw amino-acid sequence, 1209 residues long: DNA-directed RNA polymerase subunit beta'' (1209 aa).

Zn(2+)-binding residues include C233, C308, C315, and C318.

It belongs to the RNA polymerase beta' chain family. RpoC2 subfamily. As to quaternary structure, in plastids the minimal PEP RNA polymerase catalytic core is composed of four subunits: alpha, beta, beta', and beta''. When a (nuclear-encoded) sigma factor is associated with the core the holoenzyme is formed, which can initiate transcription. Zn(2+) serves as cofactor.

It localises to the plastid. The protein resides in the chloroplast. The catalysed reaction is RNA(n) + a ribonucleoside 5'-triphosphate = RNA(n+1) + diphosphate. DNA-dependent RNA polymerase catalyzes the transcription of DNA into RNA using the four ribonucleoside triphosphates as substrates. In Pinus koraiensis (Korean pine), this protein is DNA-directed RNA polymerase subunit beta''.